A 271-amino-acid polypeptide reads, in one-letter code: Shikimate dehydrogenase (NADP(+)) (271 aa).

Residues 14-16 and T61 contribute to the shikimate site; that span reads SLS. K65 functions as the Proton acceptor in the catalytic mechanism. N86 and D101 together coordinate shikimate. NADP(+)-binding positions include 125–129 and I212; that span reads GAGGA. Y214 contacts shikimate. G235 is a binding site for NADP(+).

It belongs to the shikimate dehydrogenase family. In terms of assembly, homodimer.

The enzyme catalyses shikimate + NADP(+) = 3-dehydroshikimate + NADPH + H(+). Its pathway is metabolic intermediate biosynthesis; chorismate biosynthesis; chorismate from D-erythrose 4-phosphate and phosphoenolpyruvate: step 4/7. In terms of biological role, involved in the biosynthesis of the chorismate, which leads to the biosynthesis of aromatic amino acids. Catalyzes the reversible NADPH linked reduction of 3-dehydroshikimate (DHSA) to yield shikimate (SA). The chain is Shikimate dehydrogenase (NADP(+)) from Clostridium perfringens (strain ATCC 13124 / DSM 756 / JCM 1290 / NCIMB 6125 / NCTC 8237 / Type A).